Reading from the N-terminus, the 291-residue chain is Endo-1,4-beta-xylanase 11B (291 aa).

Positions 1 to 19 (MVAFSSLFLGASIAATALA) are cleaved as a signal peptide. One can recognise a GH11 domain in the interval 34-222 (TYTQSATGTH…SSGSARINVG (189 aa)). N-linked (GlcNAc...) asparagine glycosylation is present at Asn93. Glu118 acts as the Nucleophile in catalysis. Glu209 acts as the Proton donor in catalysis. The interval 223-246 (GGSTGGGNNGGGNNGGNPGGNPGG) is disordered. The region spanning 255–291 (NCSPRWGQCGGQGWNGPTCCESGTTCRQQNQWYSQCL) is the CBM1 domain.

The protein belongs to the glycosyl hydrolase 11 (cellulase G) family.

The protein resides in the secreted. The catalysed reaction is Endohydrolysis of (1-&gt;4)-beta-D-xylosidic linkages in xylans.. Its pathway is glycan degradation; xylan degradation. With respect to regulation, the activity iss completely inhibited by Hg(2+), a metal ion that interacts with Trp and oxidizes the indole ring, and is significantly enhanced by beta-mercaptoethanol, which counteracts the oxidation effects of the S-S linkage between Cys residues. Functionally, endo-1,4-beta-xylanase involved in the hydrolysis of xylan, a major structural heterogeneous polysaccharide found in plant biomass representing the second most abundant polysaccharide in the biosphere, after cellulose. Shows maximum activity on soluble wheat arabinoxylan (defined as 100%), moderate activity on birchwood xylan (80.5%) and beechwood xylan (76.2%), and weak activity on insoluble wheat arabinoxylan (7.0%). Has no activity towards glucan or carboxymethyl cellulose-sodium (CMC-Na). The sequence is that of Endo-1,4-beta-xylanase 11B from Humicola insolens (Soft-rot fungus).